Consider the following 424-residue polypeptide: UPF0229 protein Ping_2705 (424 aa).

Positions 77-108 (PGNQDFIGGDRIERPPSGGAGGSGSGASDSGK) are disordered.

It belongs to the UPF0229 family.

The polypeptide is UPF0229 protein Ping_2705 (Psychromonas ingrahamii (strain DSM 17664 / CCUG 51855 / 37)).